The chain runs to 228 residues: Thermonuclease (228 aa).

Positions 1 to 23 (MTEYLLSAGICMAIVSILLIGMA) are cleaved as a signal peptide. Positions 24 to 60 (ISNVSKGQYAKRFFFFATSCLVLTLVVVSSLSSSANA) are excised as a propeptide. A compositionally biased stretch (polar residues) spans 58–70 (ANASQTDNGVNRS). The tract at residues 58-83 (ANASQTDNGVNRSGSEDPTVYSATST) is disordered. D100 contributes to the Ca(2+) binding site. The active site involves R114. Ca(2+)-binding residues include D119 and T120. Active-site residues include E122 and R166.

This sequence belongs to the thermonuclease family. Ca(2+) serves as cofactor.

It localises to the secreted. It carries out the reaction Endonucleolytic cleavage to nucleoside 3'-phosphates and 3'-phosphooligonucleotide end-products.. In terms of biological role, enzyme that catalyzes the hydrolysis of both DNA and RNA at the 5' position of the phosphodiester bond. The sequence is that of Thermonuclease (nuc) from Staphylococcus aureus (strain Mu50 / ATCC 700699).